The following is a 302-amino-acid chain: MWDGEKMAAAMVQMSCLYRGMLAVRNHGIRPLIPGLVPSHFRAFSMKKEPELEENPYYSKYEEKIRKLRSSKPQEYESRLEKRTELKTEPLGRSRQAEFVKYMEKELDKRGKDGDGGFTKDKTLGSILNLEMVQEKSGAEITELWMQYFSKKDTISAVIPSSTFDVIFGRAKSCPTFLYALPQNEGYEFFVGQWAGNELHFTSLINVQTMGENAPSQLILYHYTDLQKDKDIVLMTAEMDSKFVTVHQAQCLANQVQLFYGSQRLETFRLVETFNHKPEEFKHMAVIAELEQSGIGPAVTTK.

Belongs to the ATP11 family. In terms of assembly, interacts with ATP5F1B; involved in the assembly of the F1 component of the mitochondrial ATP synthase (ATPase).

The protein resides in the mitochondrion inner membrane. Has a complex stabilizing activity in the assembly of the mitochondrial F1-F0 complex. This chain is ATP synthase mitochondrial F1 complex assembly factor 1 (atpaf1), found in Danio rerio (Zebrafish).